The sequence spans 413 residues: Alpha-1-antitrypsin-like protein CM55-ST (413 aa).

The N-terminal stretch at 1 to 24 is a signal peptide; that stretch reads MPSSISWGLLLLAALSCLGPGSLA. The residue at position 25 (Gln25) is a Pyrrolidone carboxylic acid. N-linked (GlcNAc...) asparagine glycosylation is found at Asn65, Asn102, Asn165, and Asn266. The RCL stretch occupies residues 368–387; it reads GGTVLGNIRSTLRYEVIFDR.

This sequence belongs to the serpin family. Expressed in liver.

This is Alpha-1-antitrypsin-like protein CM55-ST from Tamias sibiricus (Siberian chipmunk).